Here is a 326-residue protein sequence, read N- to C-terminus: F-box/LRR-repeat protein 12 (326 aa).

The F-box domain maps to 1–47 (MATLVELPDSVLLEIFSYLPVRDRIRISRVCHRWKRLVDDRWLWRHV). LRR repeat units lie at residues 51–78 (LYTM…RMGG), 86–111 (APQL…CLHV), 113–133 (DLSM…ELHS), 161–185 (VPAF…VLGG), 186–211 (TYRV…EVLG), 212–236 (CTLS…IRLT), 237–261 (VRGL…CLQG), and 266–291 (PEMP…ELQG).

In terms of assembly, interacts with SKP1 and CUL1.

It functions in the pathway protein modification; protein ubiquitination. In terms of biological role, substrate-recognition component of the SCF (SKP1-CUL1-F-box protein)-type E3 ubiquitin ligase complex. Mediates the polyubiquitination and proteasomal degradation of CAMK1 leading to disruption of cyclin D1/CDK4 complex assembly which results in G1 cell cycle arrest in lung epithelia. The polypeptide is F-box/LRR-repeat protein 12 (FBXL12) (Homo sapiens (Human)).